Reading from the N-terminus, the 240-residue chain is Small ribosomal subunit protein uS3 (240 aa).

The region spanning 39 to 109 is the KH type-2 domain; that stretch reads IRQHIDANLN…QIRINVVEVN (71 aa). A disordered region spans residues 216–240; it reads TSAANAAPLPRRKSRRQQFEDRSEQ.

This sequence belongs to the universal ribosomal protein uS3 family. In terms of assembly, part of the 30S ribosomal subunit. Forms a tight complex with proteins S10 and S14.

In terms of biological role, binds the lower part of the 30S subunit head. Binds mRNA in the 70S ribosome, positioning it for translation. The chain is Small ribosomal subunit protein uS3 from Picosynechococcus sp. (strain ATCC 27264 / PCC 7002 / PR-6) (Agmenellum quadruplicatum).